Reading from the N-terminus, the 290-residue chain is Undecaprenyl-diphosphatase (290 aa).

6 consecutive transmembrane segments (helical) span residues 39-59 (PGAA…LIYF), 85-105 (AQMG…GITL), 118-138 (LIAT…RLAA), 202-222 (SFLL…KDVG), 230-250 (PTIF…AWFM), and 261-281 (FVIY…AGVL).

Belongs to the UppP family.

Its subcellular location is the cell membrane. The catalysed reaction is di-trans,octa-cis-undecaprenyl diphosphate + H2O = di-trans,octa-cis-undecaprenyl phosphate + phosphate + H(+). Catalyzes the dephosphorylation of undecaprenyl diphosphate (UPP). Confers resistance to bacitracin. The chain is Undecaprenyl-diphosphatase from Streptomyces griseus subsp. griseus (strain JCM 4626 / CBS 651.72 / NBRC 13350 / KCC S-0626 / ISP 5235).